Here is a 306-residue protein sequence, read N- to C-terminus: Acetyl-coenzyme A carboxylase carboxyl transferase subunit beta (306 aa).

One can recognise a CoA carboxyltransferase N-terminal domain in the interval 25–294; the sequence is LWIKDPTSGE…VVTPSPPSPT (270 aa). Residues 284–306 form a disordered region; it reads AVVTPSPPSPTDSQTSLSKTKAA.

This sequence belongs to the AccD/PCCB family. Acetyl-CoA carboxylase is a heterohexamer composed of biotin carboxyl carrier protein (AccB), biotin carboxylase (AccC) and two subunits each of ACCase subunit alpha (AccA) and ACCase subunit beta (AccD).

The protein resides in the cytoplasm. The catalysed reaction is N(6)-carboxybiotinyl-L-lysyl-[protein] + acetyl-CoA = N(6)-biotinyl-L-lysyl-[protein] + malonyl-CoA. It participates in lipid metabolism; malonyl-CoA biosynthesis; malonyl-CoA from acetyl-CoA: step 1/1. Functionally, component of the acetyl coenzyme A carboxylase (ACC) complex. Biotin carboxylase (BC) catalyzes the carboxylation of biotin on its carrier protein (BCCP) and then the CO(2) group is transferred by the transcarboxylase to acetyl-CoA to form malonyl-CoA. In Bartonella tribocorum (strain CIP 105476 / IBS 506), this protein is Acetyl-coenzyme A carboxylase carboxyl transferase subunit beta.